Here is a 198-residue protein sequence, read N- to C-terminus: Small ribosomal subunit protein uS4 (198 aa).

Positions 88 to 153 constitute an S4 RNA-binding domain; that stretch reads LRLDNVMFRM…AQRYKDILEV (66 aa).

The protein belongs to the universal ribosomal protein uS4 family. Part of the 30S ribosomal subunit. Contacts protein S5. The interaction surface between S4 and S5 is involved in control of translational fidelity.

Functionally, one of the primary rRNA binding proteins, it binds directly to 16S rRNA where it nucleates assembly of the body of the 30S subunit. In terms of biological role, with S5 and S12 plays an important role in translational accuracy. The sequence is that of Small ribosomal subunit protein uS4 from Lachnoclostridium phytofermentans (strain ATCC 700394 / DSM 18823 / ISDg) (Clostridium phytofermentans).